The primary structure comprises 86 residues: Small ribosomal subunit protein bS16 (86 aa).

Belongs to the bacterial ribosomal protein bS16 family.

The protein is Small ribosomal subunit protein bS16 of Thermoanaerobacter pseudethanolicus (strain ATCC 33223 / 39E) (Clostridium thermohydrosulfuricum).